A 689-amino-acid polypeptide reads, in one-letter code: PR domain zinc finger protein 8 (689 aa).

One can recognise an SET domain in the interval 16 to 131; sequence KAVQQCLTDI…KDEELLVWYG (116 aa). Y130 serves as a coordination point for S-adenosyl-L-methionine. A C2H2-type 1 zinc finger spans residues 155 to 183; sequence YTCLECSQRFQFEFPYVAHLRFRCPKRLH. Disordered stretches follow at residues 185-333 and 397-506; these read ADIS…VGGR and SLQE…QPAR. Residues 193–210 show a composition bias toward gly residues; sequence QGGGVGTKDHGGGGGGGK. 2 stretches are compositionally biased toward low complexity: residues 241–258 and 273–286; these read PESS…AKPS and GGSS…LSSG. A compositionally biased stretch (gly residues) spans 322 to 333; sequence EGGGGAGLVGGR. A compositionally biased stretch (low complexity) spans 423 to 433; sequence STPAAASPVGA. Residues 472–491 show a composition bias toward gly residues; sequence TSGGGGTGAGAAGGAGGGQG. 2 consecutive C2H2-type zinc fingers follow at residues 625–648 and 666–688; these read NWCA…RSHH and LKCP…MTSH.

Belongs to the class V-like SAM-binding methyltransferase superfamily. In terms of assembly, interacts with EPM2A and NHLRC1. This interaction sequesters EPM2A and NHLRC1 to the nucleus. Interacts with BHLHE22. In terms of tissue distribution, expressed in brain, heart, skeletal muscle, testes, prostate.

It is found in the nucleus. Probable histone methyltransferase, preferentially acting on 'Lys-9' of histone H3. Involved in the control of steroidogenesis through transcriptional repression of steroidogenesis marker genes such as CYP17A1 and LHCGR. Forms with BHLHE22 a transcriptional repressor complex controlling genes involved in neural development and neuronal differentiation. In the retina, it is required for rod bipolar and type 2 OFF-cone bipolar cell survival. This is PR domain zinc finger protein 8 (PRDM8) from Homo sapiens (Human).